Consider the following 261-residue polypeptide: Acetylglutamate kinase (261 aa).

Substrate contacts are provided by residues 48–49 (GG), arginine 70, and asparagine 164.

Belongs to the acetylglutamate kinase family. ArgB subfamily.

It localises to the cytoplasm. It carries out the reaction N-acetyl-L-glutamate + ATP = N-acetyl-L-glutamyl 5-phosphate + ADP. Its pathway is amino-acid biosynthesis; L-arginine biosynthesis; N(2)-acetyl-L-ornithine from L-glutamate: step 2/4. Catalyzes the ATP-dependent phosphorylation of N-acetyl-L-glutamate. The sequence is that of Acetylglutamate kinase from Roseiflexus sp. (strain RS-1).